The chain runs to 182 residues: Large ribosomal subunit protein uL10 (182 aa).

This sequence belongs to the universal ribosomal protein uL10 family. As to quaternary structure, part of the ribosomal stalk of the 50S ribosomal subunit. The N-terminus interacts with L11 and the large rRNA to form the base of the stalk. The C-terminus forms an elongated spine to which L12 dimers bind in a sequential fashion forming a multimeric L10(L12)X complex.

Functionally, forms part of the ribosomal stalk, playing a central role in the interaction of the ribosome with GTP-bound translation factors. This is Large ribosomal subunit protein uL10 from Janthinobacterium sp. (strain Marseille) (Minibacterium massiliensis).